The following is a 366-amino-acid chain: Ribosomal RNA large subunit methyltransferase M (366 aa).

Residues Ser-188, 221–224, Asp-240, Asp-260, and Asp-277 contribute to the S-adenosyl-L-methionine site; that span reads CPGG. Lys-306 functions as the Proton acceptor in the catalytic mechanism.

The protein belongs to the class I-like SAM-binding methyltransferase superfamily. RNA methyltransferase RlmE family. RlmM subfamily. In terms of assembly, monomer.

The protein resides in the cytoplasm. It carries out the reaction cytidine(2498) in 23S rRNA + S-adenosyl-L-methionine = 2'-O-methylcytidine(2498) in 23S rRNA + S-adenosyl-L-homocysteine + H(+). Its function is as follows. Catalyzes the 2'-O-methylation at nucleotide C2498 in 23S rRNA. The sequence is that of Ribosomal RNA large subunit methyltransferase M from Escherichia fergusonii (strain ATCC 35469 / DSM 13698 / CCUG 18766 / IAM 14443 / JCM 21226 / LMG 7866 / NBRC 102419 / NCTC 12128 / CDC 0568-73).